The primary structure comprises 175 residues: MNRFIIADASKCIGCRTCEVACVVSHQENQDCASLTPETFLPRIHVIKGVNISTATVCRQCEDAPCANVCPNGAISRDKGFVHVMQERCIGCKTCVVACPYGAMEVVVRPVIRNSGAGLNVRADKAEANKCDLCNHREDGPACMAACPTHALICVDRNKLEQLSAEKRRRTALMF.

4Fe-4S ferredoxin-type domains are found at residues 2–32 (NRFI…NQDC), 48–79 (KGVN…SRDK), 80–109 (GFVH…VVVR), and 124–157 (DKAE…CVDR). C12, C15, C18, C22, C58, C61, C66, C70, C89, C92, C95, C99, C131, C134, C143, and C147 together coordinate [4Fe-4S] cluster.

[4Fe-4S] cluster is required as a cofactor.

In terms of biological role, electron transport from formate to hydrogen. The polypeptide is Electron transport protein HydN (hydN) (Escherichia coli O157:H7).